The chain runs to 576 residues: Putative pentatricopeptide repeat-containing protein At5g47460 (576 aa).

PPR repeat units lie at residues 20–53, 54–88, 89–119, 120–154, 155–189, 191–225, 226–252, 253–287, 288–318, 319–353, 354–384, 385–419, 421–452, and 458–488; these read SSNS…GEKP, DASP…GFVS, NTRL…MPDP, DVIS…DVFP, NEFS…GLEK, NVVV…DTVS, WNAI…MPNP, DTVT…NSSS, WNTI…GVRF, DEYS…GLDS, RVVV…MPRK, NLIV…RFLK, DRFT…MINE, and SVEH…FGFG. The interval 493 to 570 is type E motif; the sequence is AWRALLGACS…EVGSSWIDSR (78 aa).

This sequence belongs to the PPR family. PCMP-E subfamily.

In Arabidopsis thaliana (Mouse-ear cress), this protein is Putative pentatricopeptide repeat-containing protein At5g47460 (PCMP-E103).